The following is a 417-amino-acid chain: Serine hydroxymethyltransferase 2 (417 aa).

(6S)-5,6,7,8-tetrahydrofolate is bound by residues Leu-121 and 125 to 127; that span reads GHL. Lys-230 is modified (N6-(pyridoxal phosphate)lysine). 355-357 lines the (6S)-5,6,7,8-tetrahydrofolate pocket; it reads SPF.

The protein belongs to the SHMT family. In terms of assembly, homodimer. It depends on pyridoxal 5'-phosphate as a cofactor.

The protein resides in the cytoplasm. The catalysed reaction is (6R)-5,10-methylene-5,6,7,8-tetrahydrofolate + glycine + H2O = (6S)-5,6,7,8-tetrahydrofolate + L-serine. It participates in one-carbon metabolism; tetrahydrofolate interconversion. It functions in the pathway amino-acid biosynthesis; glycine biosynthesis; glycine from L-serine: step 1/1. Its function is as follows. Catalyzes the reversible interconversion of serine and glycine with tetrahydrofolate (THF) serving as the one-carbon carrier. This reaction serves as the major source of one-carbon groups required for the biosynthesis of purines, thymidylate, methionine, and other important biomolecules. Also exhibits THF-independent aldolase activity toward beta-hydroxyamino acids, producing glycine and aldehydes, via a retro-aldol mechanism. This chain is Serine hydroxymethyltransferase 2, found in Colwellia psychrerythraea (strain 34H / ATCC BAA-681) (Vibrio psychroerythus).